The sequence spans 213 residues: MKVVVTGFDPFGGEAINPAFEAVKKLPAEIAGAEIIKVEVPTVFGTSGEKVAEAIETHQPDMVICVGQAGGRETVTVEKVAINLAEARIPDNAGQQPSDVPLVEDGATAYFTNLPIKAMVKNCHDHQLPAAISYTAGTFVCNDIMYHLLHLINTKYPTIRGGFIHVPFLPEQTIDKPTFASMSLEAITDSLFYMIEAAVKTQEDIQLQGGTTH.

Residues E78, C141, and H165 contribute to the active site.

It belongs to the peptidase C15 family. As to quaternary structure, homotetramer.

It localises to the cytoplasm. It catalyses the reaction Release of an N-terminal pyroglutamyl group from a polypeptide, the second amino acid generally not being Pro.. Functionally, removes 5-oxoproline from various penultimate amino acid residues except L-proline. The sequence is that of Pyrrolidone-carboxylate peptidase from Enterococcus faecalis (strain ATCC 700802 / V583).